Reading from the N-terminus, the 610-residue chain is Lipoprotein LpqB (610 aa).

Residues 1 to 27 (MGAEGGGRRRALRLGAYVGCGAVLLTG) form the signal peptide. Cysteine 28 is lipidated: N-palmitoyl cysteine. Residue cysteine 28 is the site of S-diacylglycerol cysteine attachment.

The protein belongs to the LpqB lipoprotein family.

The protein localises to the cell membrane. The polypeptide is Lipoprotein LpqB (Streptomyces avermitilis (strain ATCC 31267 / DSM 46492 / JCM 5070 / NBRC 14893 / NCIMB 12804 / NRRL 8165 / MA-4680)).